The sequence spans 622 residues: Low affinity potassium transport system protein Kup (622 aa).

12 consecutive transmembrane segments (helical) span residues 9 to 29 (LSAV…TSPL), 46 to 66 (PDVV…VVSV), 101 to 121 (ILVV…VITP), 137 to 157 (PALD…LFVI), 165 to 185 (VGKL…LLGL), 213 to 233 (VSFF…ALYA), 247 to 267 (WFTV…ALLL), 276 to 296 (PFFL…ATLA), 337 to 357 (IYIP…IIGF), 363 to 383 (LAAA…ILFC), 395 to 415 (FLVV…FSAN), and 416 to 436 (VLKL…MFII).

The protein belongs to the HAK/KUP transporter (TC 2.A.72) family.

The protein localises to the cell inner membrane. The catalysed reaction is K(+)(in) + H(+)(in) = K(+)(out) + H(+)(out). Functionally, responsible for the low-affinity transport of potassium into the cell. Likely operates as a K(+):H(+) symporter. This is Low affinity potassium transport system protein Kup from Yersinia pestis bv. Antiqua (strain Antiqua).